The following is a 572-amino-acid chain: MRQSRTLIPTLREVPADAEAKSHQLLLRAGFIRQNTSGVYSYMPLANKVIHKIQSIVREEMEKINAVEMLMPALQQAETWQESGRWYTYGPELMRLKDRHGREFALGATHEEVITSIVRDEVKSYKRLPLTLYQIQSKFRDEKRPRFGLLRGREFIMKDAYSFHSSAESLDETYNDMYQAYTNVFTRCGLNFRPVIADSGAMGGKDTHEFMALSDVGEDTIAYSDQSSYAANIEMAEVKETDAGEQAEMKELQEVHTPSVKTIEEVAAFLGISPSDCIKSMLMKADGRFVLVLTRGDHEVNDVKVKNLLQAEIIEFASAEEVAEITGTEPGFVGPVGLDREIEIFADFAVKAMANAAAGANKTDYHYQNVNISRDAHNVTFADLRFIQEGDPSPDGKGTIRFAKGIEVGQVFKLGTRYSEAMDATYLDENGRAQPMLMGCYGIGISRTLSAIVEQHHDDKGLIWPLEVTPYDLHILALNMKNDAQVQLAEKLYEEFKANGYDVLFDDRAERAGVKFADSDLIGLPIRITVGKRADEGVVEVKIRKTGESFEIAADELFDFIEKQVKSLSSHS.

This sequence belongs to the class-II aminoacyl-tRNA synthetase family. ProS type 1 subfamily. Homodimer.

It localises to the cytoplasm. It catalyses the reaction tRNA(Pro) + L-proline + ATP = L-prolyl-tRNA(Pro) + AMP + diphosphate. Catalyzes the attachment of proline to tRNA(Pro) in a two-step reaction: proline is first activated by ATP to form Pro-AMP and then transferred to the acceptor end of tRNA(Pro). As ProRS can inadvertently accommodate and process non-cognate amino acids such as alanine and cysteine, to avoid such errors it has two additional distinct editing activities against alanine. One activity is designated as 'pretransfer' editing and involves the tRNA(Pro)-independent hydrolysis of activated Ala-AMP. The other activity is designated 'posttransfer' editing and involves deacylation of mischarged Ala-tRNA(Pro). The misacylated Cys-tRNA(Pro) is not edited by ProRS. This chain is Proline--tRNA ligase, found in Bacillus licheniformis (strain ATCC 14580 / DSM 13 / JCM 2505 / CCUG 7422 / NBRC 12200 / NCIMB 9375 / NCTC 10341 / NRRL NRS-1264 / Gibson 46).